A 454-amino-acid chain; its full sequence is Epsin-1 (454 aa).

The 133-residue stretch at 11–143 (NLVKGYSSTQ…SDDERLNEER (133 aa)) folds into the ENTH domain. Disordered stretches follow at residues 142-195 (ERNM…EDYE) and 292-350 (YLAS…GNQS). The segment covering 149–160 (GRNRKGRRRRGT) has biased composition (basic residues). The residue at position 160 (threonine 160) is a Phosphothreonine. Serine 163 bears the Phosphoserine mark. UIM domains lie at 165 to 184 (ENDDDLQRAISASRLTAEED) and 189 to 208 (KQDEDYETALQLSKEEEELK). The residue at position 180 (threonine 180) is a Phosphothreonine. Residues 180-191 (TAEEDERRRKQD) show a composition bias toward basic and acidic residues. A compositionally biased stretch (low complexity) spans 292–302 (YLASMQQQQQA). Polar residues-rich tracts occupy residues 303–329 (MSNNPFAKSEQSSSSPKRNQLVAASSP) and 340–350 (PLIQNRTGNQS). A Phosphoserine modification is found at serine 328. Residue lysine 357 forms a Glycyl lysine isopeptide (Lys-Gly) (interchain with G-Cter in ubiquitin) linkage. Threonine 364, threonine 366, threonine 384, threonine 386, and threonine 388 each carry phosphothreonine. Residues 384–398 (TKTGTFINSQGTGYR) are compositionally biased toward polar residues. The disordered stretch occupies residues 384–405 (TKTGTFINSQGTGYRQVSDDPN). Phosphothreonine; by PRK1 is present on residues threonine 395 and threonine 415. Residues 418-428 (PSTSVVPTQTG) show a composition bias toward polar residues. The segment at 418–454 (PSTSVVPTQTGYGFGNQSQQQSQNNGSNNRGYTLIDL) is disordered. Residues 432 to 446 (GNQSQQQSQNNGSNN) show a composition bias toward low complexity. A clathrin-binding region spans residues 447–454 (RGYTLIDL).

It belongs to the epsin family. As to quaternary structure, interacts with EDE1 and PAN1.

Its subcellular location is the cytoplasm. The protein resides in the membrane. Functionally, binds to membranes enriched in phosphatidylinositol 3,5-bisphosphate (PtdIns(3,5)P2) and phosphatidylinositol 4,5-bisphosphate (PtdIns(4,5)P2). Required for endocytosis and localization of actin. Negatively regulated via phosphorylation. This is Epsin-1 (ENT1) from Saccharomyces cerevisiae (strain ATCC 204508 / S288c) (Baker's yeast).